The chain runs to 431 residues: Glucose-1-phosphate adenylyltransferase (431 aa).

Lys39 is a beta-D-fructose 1,6-bisphosphate binding site. 3 residues coordinate AMP: Arg40, His46, and Arg52. Residue Tyr114 participates in alpha-D-glucose 1-phosphate binding. Arg130 serves as a coordination point for AMP. Residues Gly179, 194–195 (EK), and Ser212 each bind alpha-D-glucose 1-phosphate. Arg386 lines the AMP pocket. 429–431 (QER) contacts beta-D-fructose 1,6-bisphosphate.

It belongs to the bacterial/plant glucose-1-phosphate adenylyltransferase family. Homotetramer.

The enzyme catalyses alpha-D-glucose 1-phosphate + ATP + H(+) = ADP-alpha-D-glucose + diphosphate. It functions in the pathway glycan biosynthesis; glycogen biosynthesis. With respect to regulation, allosterically activated by fructose-1,6-bisphosphate (F16BP) and inhibited by AMP. In terms of biological role, involved in the biosynthesis of ADP-glucose, a building block required for the elongation reactions to produce glycogen. Catalyzes the reaction between ATP and alpha-D-glucose 1-phosphate (G1P) to produce pyrophosphate and ADP-Glc. The polypeptide is Glucose-1-phosphate adenylyltransferase (Klebsiella pneumoniae subsp. pneumoniae (strain ATCC 700721 / MGH 78578)).